The sequence spans 736 residues: MDSNVDSQRVPDGQIFFRPVHPGISGKDMESGTSDGQQRKMMEFEISEEADMRLTRQQTQNRTGFASADTKQGSPEGADRKKMPPGKAWLWFVLILIVNFLMVRLLIPDAEQPVMVPYTLFKGEVGKGNVKEIFSRGDTITGRFKEEIAYQAAEEKAGDSRKASKAVTTFTTTVPSFVDPGLEAFLISNGVEISAKPIHEERSPWATIVYSFGPGLLFIAFYIWLFRRMAQQGGLGGGIMGIGKSKARRYDQEEGRKVTFDDVAGIDEAENELVEIVDFLKDPPKYTRLGGTAPKGVLLVGAPGTGKTLLAKAVAGEAGVPFFSMSAAEFVEMIVGVGAARVRDLFKQAREHAPAIIFIDELDAIGRARGQVAIGGASEQEQTLNQILTEMDGFSSREGIIVLAATNQPDVLDKALLRPGRFDRRVVVNLPDKVGREAILKVHTRSVPLAKDASLGELAAATPGFSGADLRNLVNEAALMAARRDQDDVRARDFLDALEKIVLGPERPLLLSHADKERIAYHEGGHAILGLVAHGADRVHRVTIVPRGQALGVTYQRPDSDRYNYTEAYLRAKIVGMLGGRAAEEIVYGTRTTGAESDIEQATGLAHRMVTRWGMSERLGLIQLAPRENPYLGGPAGYGSARPFSDGTAEAIDAEVIRIIAESHEEAKRLLRAYRKQLDVLAEALVAQETLDEQEILRITGLPPAPALDAGKLPVPDGGDKNAEPSVSLPGVAGPS.

Disordered regions lie at residues 1-39 (MDSN…GQQR) and 57-83 (QQTQ…RKKM). The Cytoplasmic segment spans residues 1–87 (MDSNVDSQRV…ADRKKMPPGK (87 aa)). Residues 57 to 73 (QQTQNRTGFASADTKQG) are compositionally biased toward polar residues. A helical transmembrane segment spans residues 88 to 108 (AWLWFVLILIVNFLMVRLLIP). The Periplasmic portion of the chain corresponds to 109-205 (DAEQPVMVPY…KPIHEERSPW (97 aa)). Residues 206–226 (ATIVYSFGPGLLFIAFYIWLF) form a helical membrane-spanning segment. Topologically, residues 227–736 (RRMAQQGGLG…VSLPGVAGPS (510 aa)) are cytoplasmic. 301–308 (GAPGTGKT) is a binding site for ATP. Histidine 522 is a Zn(2+) binding site. The active site involves glutamate 523. Residues histidine 526 and aspartate 598 each contribute to the Zn(2+) site. A disordered region spans residues 706-736 (PALDAGKLPVPDGGDKNAEPSVSLPGVAGPS).

It in the central section; belongs to the AAA ATPase family. The protein in the C-terminal section; belongs to the peptidase M41 family. As to quaternary structure, homohexamer. Zn(2+) is required as a cofactor.

The protein resides in the cell inner membrane. Its function is as follows. Acts as a processive, ATP-dependent zinc metallopeptidase for both cytoplasmic and membrane proteins. Plays a role in the quality control of integral membrane proteins. This Syntrophus aciditrophicus (strain SB) protein is ATP-dependent zinc metalloprotease FtsH.